The following is a 179-amino-acid chain: Chymotrypsin inhibitor ECI (179 aa).

Position 1 is a pyrrolidone carboxylic acid (Q1). 2 disulfide bridges follow: C40–C84 and C134–C143.

This sequence belongs to the protease inhibitor I3 (leguminous Kunitz-type inhibitor) family.

Its function is as follows. Inhibition of chymotrypsin. The protein is Chymotrypsin inhibitor ECI of Erythrina variegata (Indian coral tree).